The primary structure comprises 403 residues: Homoserine O-succinyltransferase (403 aa).

Residues 1 to 31 (MTELQVDPAASADPAAAADTPRHPAATLPPD) form a disordered region. Low complexity predominate over residues 7–26 (DPAASADPAAAADTPRHPAA). The region spanning 74 to 383 (NAVLICHALN…HGHDAFLLED (310 aa)) is the AB hydrolase-1 domain. The active-site Nucleophile is serine 178. Arginine 248 contacts substrate. Active-site residues include aspartate 343 and histidine 376. Residue aspartate 377 participates in substrate binding.

This sequence belongs to the AB hydrolase superfamily. MetX family. Homodimer.

It localises to the cytoplasm. It carries out the reaction L-homoserine + succinyl-CoA = O-succinyl-L-homoserine + CoA. It participates in amino-acid biosynthesis; L-methionine biosynthesis via de novo pathway; O-succinyl-L-homoserine from L-homoserine: step 1/1. Functionally, transfers a succinyl group from succinyl-CoA to L-homoserine, forming succinyl-L-homoserine. This chain is Homoserine O-succinyltransferase, found in Ralstonia nicotianae (strain ATCC BAA-1114 / GMI1000) (Ralstonia solanacearum).